A 681-amino-acid polypeptide reads, in one-letter code: Pentatricopeptide repeat-containing protein At2g22410, mitochondrial (681 aa).

Residues 1-32 (MNISKAKLLLLPPPLTPKLNRSLYSHSQRRTR) constitute a mitochondrion transit peptide. PPR repeat units lie at residues 117–151 (NIFS…GCCE), 155–189 (DHFT…RLEL), 190–220 (VSHV…SPVR), 221–255 (DLVS…GVKP), 256–290 (DDVT…GLRM), 291–321 (TIPL…LEKR), 322–356 (TIVS…DVVL), 357–387 (WNAM…NTKP), 388–422 (DEIT…SLSL), 423–453 (NVAL…IQTR), 454–488 (NSLT…GIAP), 489–519 (DEIT…MKSR), and 525–555 (QLKH…MPME). The segment at 560–635 (VWGALLFGCR…IPGCSSIEVN (76 aa)) is type E motif. The type E(+) motif stretch occupies residues 636–666 (GIVCEFIVRDKSRPESEKIYDRLHCLGRHMR).

The protein belongs to the PPR family. PCMP-E subfamily.

It localises to the mitochondrion. This is Pentatricopeptide repeat-containing protein At2g22410, mitochondrial (PCMP-E28) from Arabidopsis thaliana (Mouse-ear cress).